The sequence spans 356 residues: Protein U8 (356 aa).

It belongs to the herpesviridae US22 family.

In Homo sapiens (Human), this protein is Protein U8 (U8).